A 380-amino-acid chain; its full sequence is Putative 8-amino-7-oxononanoate synthase (380 aa).

R18 provides a ligand contact to substrate. Pyridoxal 5'-phosphate is bound at residue 106-107 (GY). H131 contacts substrate. Pyridoxal 5'-phosphate-binding positions include S179, 205–208 (DEAH), and 236–239 (TFGK). An N6-(pyridoxal phosphate)lysine modification is found at K239. T352 serves as a coordination point for substrate.

The protein belongs to the class-II pyridoxal-phosphate-dependent aminotransferase family. BioF subfamily. In terms of assembly, homodimer. Pyridoxal 5'-phosphate is required as a cofactor.

The catalysed reaction is 6-carboxyhexanoyl-[ACP] + L-alanine + H(+) = (8S)-8-amino-7-oxononanoate + holo-[ACP] + CO2. It participates in cofactor biosynthesis; biotin biosynthesis. In terms of biological role, catalyzes the decarboxylative condensation of pimeloyl-[acyl-carrier protein] and L-alanine to produce 8-amino-7-oxononanoate (AON), [acyl-carrier protein], and carbon dioxide. In Haemophilus influenzae (strain ATCC 51907 / DSM 11121 / KW20 / Rd), this protein is Putative 8-amino-7-oxononanoate synthase (bioF).